The sequence spans 187 residues: UPF0301 protein YqgE (187 aa).

It belongs to the UPF0301 (AlgH) family.

The polypeptide is UPF0301 protein YqgE (Escherichia coli O139:H28 (strain E24377A / ETEC)).